The chain runs to 92 residues: Co-chaperonin GroES (92 aa).

The protein belongs to the GroES chaperonin family. Heptamer of 7 subunits arranged in a ring. Interacts with the chaperonin GroEL.

Its subcellular location is the cytoplasm. In terms of biological role, together with the chaperonin GroEL, plays an essential role in assisting protein folding. The GroEL-GroES system forms a nano-cage that allows encapsulation of the non-native substrate proteins and provides a physical environment optimized to promote and accelerate protein folding. GroES binds to the apical surface of the GroEL ring, thereby capping the opening of the GroEL channel. This chain is Co-chaperonin GroES, found in Thermotoga maritima (strain ATCC 43589 / DSM 3109 / JCM 10099 / NBRC 100826 / MSB8).